The following is a 109-amino-acid chain: C-X-C motif chemokine 13 (109 aa).

The first 22 residues, 1 to 22, serve as a signal peptide directing secretion; it reads MKFISTSLLLMLLVSSLSPVQG. Cystine bridges form between C33-C60 and C35-C76.

Belongs to the intercrine alpha (chemokine CxC) family. As to expression, highest levels in liver, followed by spleen, lymph node, appendix and stomach. Low levels in salivary gland, mammary gland and fetal spleen.

The protein resides in the secreted. Functionally, chemotactic for B-lymphocytes but not for T-lymphocytes, monocytes and neutrophils. Does not induce calcium release in B-lymphocytes. Binds to BLR1/CXCR5. This is C-X-C motif chemokine 13 (CXCL13) from Homo sapiens (Human).